A 181-amino-acid chain; its full sequence is Adenine phosphoribosyltransferase (181 aa).

The protein belongs to the purine/pyrimidine phosphoribosyltransferase family. Homodimer.

It is found in the cytoplasm. It catalyses the reaction AMP + diphosphate = 5-phospho-alpha-D-ribose 1-diphosphate + adenine. It functions in the pathway purine metabolism; AMP biosynthesis via salvage pathway; AMP from adenine: step 1/1. Functionally, catalyzes a salvage reaction resulting in the formation of AMP, that is energically less costly than de novo synthesis. This is Adenine phosphoribosyltransferase from Vibrio campbellii (strain ATCC BAA-1116).